The sequence spans 552 residues: Dihydroxy-acid dehydratase (552 aa).

A Mg(2+)-binding site is contributed by Asp78. Cys119 is a binding site for [2Fe-2S] cluster. Residues Asp120 and Lys121 each contribute to the Mg(2+) site. Lys121 is modified (N6-carboxylysine). Cys191 is a [2Fe-2S] cluster binding site. A Mg(2+)-binding site is contributed by Glu442. Ser468 (proton acceptor) is an active-site residue.

This sequence belongs to the IlvD/Edd family. In terms of assembly, homodimer. [2Fe-2S] cluster is required as a cofactor. It depends on Mg(2+) as a cofactor.

It carries out the reaction (2R)-2,3-dihydroxy-3-methylbutanoate = 3-methyl-2-oxobutanoate + H2O. The catalysed reaction is (2R,3R)-2,3-dihydroxy-3-methylpentanoate = (S)-3-methyl-2-oxopentanoate + H2O. It functions in the pathway amino-acid biosynthesis; L-isoleucine biosynthesis; L-isoleucine from 2-oxobutanoate: step 3/4. The protein operates within amino-acid biosynthesis; L-valine biosynthesis; L-valine from pyruvate: step 3/4. In terms of biological role, functions in the biosynthesis of branched-chain amino acids. Catalyzes the dehydration of (2R,3R)-2,3-dihydroxy-3-methylpentanoate (2,3-dihydroxy-3-methylvalerate) into 2-oxo-3-methylpentanoate (2-oxo-3-methylvalerate) and of (2R)-2,3-dihydroxy-3-methylbutanoate (2,3-dihydroxyisovalerate) into 2-oxo-3-methylbutanoate (2-oxoisovalerate), the penultimate precursor to L-isoleucine and L-valine, respectively. In Clostridium botulinum (strain Eklund 17B / Type B), this protein is Dihydroxy-acid dehydratase.